The following is a 63-amino-acid chain: Large ribosomal subunit protein bL28 (63 aa).

The protein belongs to the bacterial ribosomal protein bL28 family.

The chain is Large ribosomal subunit protein bL28 from Geotalea daltonii (strain DSM 22248 / JCM 15807 / FRC-32) (Geobacter daltonii).